The sequence spans 497 residues: MGLEALVPLAVIVAIFLLLVDLMHRRQRWAARYPPGPLPLPGLGNLLHVDFQNTPYCFDQLRRRFGDVFSLQLAWTPVVVLNGLAAVREALVTHGEDTADRPPVPITQILGFGPRSQGVFLARYGPAWREQRRFSVSTLRNLGLGKKSLEQWVTEEAACLCAAFANHSGRPFRPNGLLDKAVSNVIASLTCGRRFEYDDPRFLRLLDLAQEGLKEESGFLREVLNAVPVLLHIPALAGKVLRFQKAFLTQLDELLTEHRMTWDPAQPPRDLTEAFLAEMEKAKGNPESSFNDENLRIVVADLFSAGMVTTSTTLAWGLLLMILHPDVQRRVQQEIDDVIGQVRRPEMGDQAHMPYTTAVIHEVQRFGDIVPLGVTHMTSRDIEVQGFRIPKGTTLITNLSSVLKDEAVWEKPFRFHPEHFLDAQGHFVKPEAFLPFSAGRRACLGEPLARMELFLFFTSLLQHFSFSVPTGQPRPSHHGVFAFLVSPSPYELCAVPR.

Asp-301 lines the substrate pocket. Cys-443 lines the heme pocket.

This sequence belongs to the cytochrome P450 family. Heme serves as cofactor.

It localises to the endoplasmic reticulum membrane. The protein localises to the microsome membrane. It catalyses the reaction (5Z,8Z,11Z,14Z)-eicosatetraenoate + reduced [NADPH--hemoprotein reductase] + O2 = (8R,9S)-epoxy-(5Z,11Z,14Z)-eicosatrienoate + oxidized [NADPH--hemoprotein reductase] + H2O + H(+). The catalysed reaction is (5Z,8Z,11Z,14Z)-eicosatetraenoate + reduced [NADPH--hemoprotein reductase] + O2 = (11R,12S)-epoxy-(5Z,8Z,14Z)-eicosatrienoate + oxidized [NADPH--hemoprotein reductase] + H2O + H(+). It carries out the reaction (5Z,8Z,11Z,14Z)-eicosatetraenoate + reduced [NADPH--hemoprotein reductase] + O2 = (14S,15R)-epoxy-(5Z,8Z,11Z)-eicosatrienoate + oxidized [NADPH--hemoprotein reductase] + H2O + H(+). The enzyme catalyses N-(5Z,8Z,11Z,14Z-eicosatetraenoyl)-ethanolamine + reduced [NADPH--hemoprotein reductase] + O2 = N-(8,9-epoxy-5Z,11Z,14Z-eicosatrienoyl)-ethanolamine + oxidized [NADPH--hemoprotein reductase] + H2O + H(+). It catalyses the reaction N-(5Z,8Z,11Z,14Z-eicosatetraenoyl)-ethanolamine + reduced [NADPH--hemoprotein reductase] + O2 = N-(11,12-epoxy-5Z,8Z,14Z-eicosatrienoyl)-ethanolamine + oxidized [NADPH--hemoprotein reductase] + H2O + H(+). The catalysed reaction is N-(5Z,8Z,11Z,14Z-eicosatetraenoyl)-ethanolamine + reduced [NADPH--hemoprotein reductase] + O2 = N-(14,15-epoxy-5Z,8Z,11Z-eicosatrienoyl)-ethanolamine + oxidized [NADPH--hemoprotein reductase] + H2O + H(+). It carries out the reaction N-(5Z,8Z,11Z,14Z-eicosatetraenoyl)-ethanolamine + reduced [NADPH--hemoprotein reductase] + O2 = N-(20-hydroxy-5Z,8Z,11Z,14Z-eicosatetraenoyl)-ethanolamine + oxidized [NADPH--hemoprotein reductase] + H2O + H(+). The enzyme catalyses (5Z,8Z,11Z,14Z,17Z)-eicosapentaenoate + reduced [NADPH--hemoprotein reductase] + O2 = (17S,18R)-epoxy-(5Z,8Z,11Z,14Z)-eicosatetraenoate + oxidized [NADPH--hemoprotein reductase] + H2O + H(+). It catalyses the reaction (4Z,7Z,10Z,13Z,16Z,19Z)-docosahexaenoate + reduced [NADPH--hemoprotein reductase] + O2 = (19R,20S)-epoxy-(4Z,7Z,10Z,13Z,16Z)-docosapentaenoate + oxidized [NADPH--hemoprotein reductase] + H2O + H(+). The catalysed reaction is (4Z,7Z,10Z,13Z,16Z,19Z)-docosahexaenoate + reduced [NADPH--hemoprotein reductase] + O2 = (19S,20R)-epoxy-(4Z,7Z,10Z,13Z,16Z)-docosapentaenoate + oxidized [NADPH--hemoprotein reductase] + H2O + H(+). It carries out the reaction cholesterol + reduced [NADPH--hemoprotein reductase] + O2 = 25-hydroxycholesterol + oxidized [NADPH--hemoprotein reductase] + H2O + H(+). The enzyme catalyses all-trans-retinol + reduced [NADPH--hemoprotein reductase] + O2 = all-trans-retinal + oxidized [NADPH--hemoprotein reductase] + 2 H2O + H(+). Its pathway is cofactor metabolism; retinol metabolism. It participates in lipid metabolism; fatty acid metabolism. It functions in the pathway steroid metabolism; cholesterol metabolism. In terms of biological role, a cytochrome P450 monooxygenase involved in the metabolism of fatty acids, steroids and retinoids. Mechanistically, uses molecular oxygen inserting one oxygen atom into a substrate, and reducing the second into a water molecule, with two electrons provided by NADPH via cytochrome P450 reductase (NADPH--hemoprotein reductase). Catalyzes the epoxidation of double bonds of polyunsaturated fatty acids (PUFA). Metabolizes endocannabinoid arachidonoylethanolamide (anandamide) to 20-hydroxyeicosatetraenoic acid ethanolamide (20-HETE-EA) and 8,9-, 11,12-, and 14,15-epoxyeicosatrienoic acid ethanolamides (EpETrE-EAs), potentially modulating endocannabinoid system signaling. Catalyzes the hydroxylation of carbon-hydrogen bonds. Metabolizes cholesterol toward 25-hydroxycholesterol, a physiological regulator of cellular cholesterol homeostasis. Catalyzes the oxidative transformations of all-trans retinol to all-trans retinal, a precursor for the active form all-trans-retinoic acid. Also involved in the oxidative metabolism of drugs such as antiarrhythmics, adrenoceptor antagonists, and tricyclic antidepressants. In Homo sapiens (Human), this protein is Cytochrome P450 2D6.